The primary structure comprises 173 residues: MLKIKQEIYKNSLQVILKFFFALLCFCIILFPLLSYKINIQSRIFPAMEIIFIYYFMSLYSLNIFSIFFLGLLIDQISGMPIGTDSLVFVSANIIYKLSSKYFLAKNYLINFVVFCFYCLFILNFKYLLVTIKNLEVEGYLIIFFQSLTTIFSYNIIRLILDSPMDYFKKYAK.

4 helical membrane passes run Leu-13–Ser-35, Ile-50–Leu-72, Asn-107–Leu-129, and Gly-139–Leu-161.

Its subcellular location is the cell membrane. This is an uncharacterized protein from Rickettsia prowazekii (strain Madrid E).